The chain runs to 203 residues: GTP cyclohydrolase 1 (203 aa).

Zn(2+)-binding residues include C87, H90, and C158.

This sequence belongs to the GTP cyclohydrolase I family. As to quaternary structure, toroid-shaped homodecamer, composed of two pentamers of five dimers.

It catalyses the reaction GTP + H2O = 7,8-dihydroneopterin 3'-triphosphate + formate + H(+). The protein operates within cofactor biosynthesis; 7,8-dihydroneopterin triphosphate biosynthesis; 7,8-dihydroneopterin triphosphate from GTP: step 1/1. The sequence is that of GTP cyclohydrolase 1 from Xylella fastidiosa (strain 9a5c).